The following is a 940-amino-acid chain: Beta-mannosidase A (940 aa).

Residues 1–21 (MHFHGIATQAVLASNITTGSG) form the signal peptide. N-linked (GlcNAc...) asparagine glycans are attached at residues Asn15, Asn39, Asn79, Asn245, Asn314, Asn321, and Asn344. The active-site Proton donor is the Glu476. Residues Asn534, Asn605, Asn626, Asn653, Asn733, Asn761, and Asn785 are each glycosylated (N-linked (GlcNAc...) asparagine).

Belongs to the glycosyl hydrolase 2 family. Beta-mannosidase A subfamily. In terms of assembly, homodimer.

The protein localises to the secreted. It catalyses the reaction Hydrolysis of terminal, non-reducing beta-D-mannose residues in beta-D-mannosides.. It participates in glycan metabolism; N-glycan degradation. Functionally, exoglycosidase that cleaves the single beta-linked mannose residue from the non-reducing end of beta-mannosidic oligosaccharides of various complexity and length. Involved in the degradation of polymeric mannan and galactomannan. The sequence is that of Beta-mannosidase A (mndA) from Emericella nidulans (strain FGSC A4 / ATCC 38163 / CBS 112.46 / NRRL 194 / M139) (Aspergillus nidulans).